The sequence spans 131 residues: Small ribosomal subunit protein uS8 (131 aa).

This sequence belongs to the universal ribosomal protein uS8 family. In terms of assembly, part of the 30S ribosomal subunit. Contacts proteins S5 and S12.

One of the primary rRNA binding proteins, it binds directly to 16S rRNA central domain where it helps coordinate assembly of the platform of the 30S subunit. The polypeptide is Small ribosomal subunit protein uS8 (Helicobacter pylori (strain P12)).